The following is a 304-amino-acid chain: Ribonuclease Z (304 aa).

Residues histidine 63, histidine 65, aspartate 67, histidine 68, histidine 143, aspartate 213, and histidine 271 each coordinate Zn(2+). The active-site Proton acceptor is the aspartate 67.

The protein belongs to the RNase Z family. As to quaternary structure, homodimer. Zn(2+) is required as a cofactor.

The catalysed reaction is Endonucleolytic cleavage of RNA, removing extra 3' nucleotides from tRNA precursor, generating 3' termini of tRNAs. A 3'-hydroxy group is left at the tRNA terminus and a 5'-phosphoryl group is left at the trailer molecule.. Its function is as follows. Zinc phosphodiesterase, which displays some tRNA 3'-processing endonuclease activity. Probably involved in tRNA maturation, by removing a 3'-trailer from precursor tRNA. This Porphyromonas gingivalis (strain ATCC 33277 / DSM 20709 / CIP 103683 / JCM 12257 / NCTC 11834 / 2561) protein is Ribonuclease Z.